Reading from the N-terminus, the 1271-residue chain is ATP-dependent helicase/nuclease subunit A (1271 aa).

In terms of domain architecture, UvrD-like helicase ATP-binding spans 3–476 (TKWTEEQELA…IMLYKNFRSR (474 aa)). 24–31 (AAAGSGKT) contributes to the ATP binding site. The region spanning 528-824 (IENLKVAGDI…RIMSIHKSKG (297 aa)) is the UvrD-like helicase C-terminal domain.

The protein belongs to the helicase family. AddA subfamily. As to quaternary structure, heterodimer of AddA and AddB/RexB. The cofactor is Mg(2+).

The enzyme catalyses Couples ATP hydrolysis with the unwinding of duplex DNA by translocating in the 3'-5' direction.. It catalyses the reaction ATP + H2O = ADP + phosphate + H(+). Its function is as follows. The heterodimer acts as both an ATP-dependent DNA helicase and an ATP-dependent, dual-direction single-stranded exonuclease. Recognizes the chi site generating a DNA molecule suitable for the initiation of homologous recombination. The AddA nuclease domain is required for chi fragment generation; this subunit has the helicase and 3' -&gt; 5' nuclease activities. The polypeptide is ATP-dependent helicase/nuclease subunit A (Clostridium perfringens (strain ATCC 13124 / DSM 756 / JCM 1290 / NCIMB 6125 / NCTC 8237 / Type A)).